Here is a 414-residue protein sequence, read N- to C-terminus: Imidazolonepropionase (414 aa).

Fe(3+) contacts are provided by histidine 95 and histidine 97. 2 residues coordinate Zn(2+): histidine 95 and histidine 97. 4-imidazolone-5-propanoate contacts are provided by arginine 104, tyrosine 162, and histidine 189. Tyrosine 162 contacts N-formimidoyl-L-glutamate. Residue histidine 252 coordinates Fe(3+). Histidine 252 serves as a coordination point for Zn(2+). Glutamine 255 serves as a coordination point for 4-imidazolone-5-propanoate. Residue aspartate 326 coordinates Fe(3+). Aspartate 326 lines the Zn(2+) pocket. N-formimidoyl-L-glutamate-binding residues include asparagine 328 and glycine 330. Residue serine 331 coordinates 4-imidazolone-5-propanoate.

This sequence belongs to the metallo-dependent hydrolases superfamily. HutI family. Requires Zn(2+) as cofactor. It depends on Fe(3+) as a cofactor.

Its subcellular location is the cytoplasm. The catalysed reaction is 4-imidazolone-5-propanoate + H2O = N-formimidoyl-L-glutamate. The protein operates within amino-acid degradation; L-histidine degradation into L-glutamate; N-formimidoyl-L-glutamate from L-histidine: step 3/3. In terms of biological role, catalyzes the hydrolytic cleavage of the carbon-nitrogen bond in imidazolone-5-propanoate to yield N-formimidoyl-L-glutamate. It is the third step in the universal histidine degradation pathway. This chain is Imidazolonepropionase, found in Streptomyces avermitilis (strain ATCC 31267 / DSM 46492 / JCM 5070 / NBRC 14893 / NCIMB 12804 / NRRL 8165 / MA-4680).